The chain runs to 182 residues: tRNA-splicing endonuclease (182 aa).

Residues Tyr119, His127, and Lys158 contribute to the active site.

This sequence belongs to the tRNA-intron endonuclease family. Archaeal short subfamily. Homotetramer; although the tetramer contains four active sites, only two participate in the cleavage. Therefore, it should be considered as a dimer of dimers.

It catalyses the reaction pretRNA = a 3'-half-tRNA molecule with a 5'-OH end + a 5'-half-tRNA molecule with a 2',3'-cyclic phosphate end + an intron with a 2',3'-cyclic phosphate and a 5'-hydroxyl terminus.. Functionally, endonuclease that removes tRNA introns. Cleaves pre-tRNA at the 5'- and 3'-splice sites to release the intron. The products are an intron and two tRNA half-molecules bearing 2',3' cyclic phosphate and 5'-OH termini. Recognizes a pseudosymmetric substrate in which 2 bulged loops of 3 bases are separated by a stem of 4 bp. The polypeptide is tRNA-splicing endonuclease (Saccharolobus islandicus (strain M.16.27) (Sulfolobus islandicus)).